The following is a 593-amino-acid chain: RNA-binding protein 47 (593 aa).

Residues 1–20 (MTAEDSTAAMSSDSAAGSSA) show a composition bias toward low complexity. Residues 1–25 (MTAEDSTAAMSSDSAAGSSAKVPEG) are disordered. RRM domains lie at 71–149 (CEVF…CSVD), 151–233 (CRLF…WAEP), and 246–318 (KILY…LAKP). Position 332 is an omega-N-methylarginine (R332). Asymmetric dimethylarginine; alternate is present on residues R394 and R405. R394 and R405 each carry omega-N-methylarginine; alternate.

The protein belongs to the RRM RBM47 family. In terms of assembly, homodimer. Interacts with A1CF. Interacts with APOBEC1; form an mRNA editing complex. Interacts with RBPMS.

The protein resides in the nucleus. It localises to the cytoplasm. In terms of biological role, single-stranded RNA-binding protein that functions in a variety of RNA processes, including alternative splicing, RNA stabilization, and RNA editing. Functions as an enzyme-substrate adapter for the cytidine deaminase APOBEC1. With APOBEC1 forms an mRNA editing complex involved into cytidine to uridine editing of a variety of mRNA molecules. Through the binding of their 3'UTR, also stabilizes a variety of mRNAs and regulates the expression of genes such as the interferon alpha/beta receptor and interleukin-10. Also involved in the alternative splicing of several genes including TJP1. Binds the pre-mRNA (U)GCAUG consensus sequences in downstream intronic regions of alternative exons, regulating their exclusion and inclusion into mRNAs. Independently of its RNA-binding activity, could negatively regulate MAVS by promoting its lysosomal degradation. This chain is RNA-binding protein 47, found in Homo sapiens (Human).